The sequence spans 242 residues: ATP synthase subunit a (242 aa).

The next 6 helical transmembrane spans lie at 29-49 (SAVA…TAFV), 84-104 (FFPL…LGMV), 114-134 (IIVT…YGIY), 140-160 (FFSL…MVII), 181-201 (VAGH…TWLF), and 206-226 (IALV…QAYI).

It belongs to the ATPase A chain family. F-type ATPases have 2 components, CF(1) - the catalytic core - and CF(0) - the membrane proton channel. CF(1) has five subunits: alpha(3), beta(3), gamma(1), delta(1), epsilon(1). CF(0) has three main subunits: a(1), b(2) and c(9-12). The alpha and beta chains form an alternating ring which encloses part of the gamma chain. CF(1) is attached to CF(0) by a central stalk formed by the gamma and epsilon chains, while a peripheral stalk is formed by the delta and b chains.

It localises to the cell inner membrane. Functionally, key component of the proton channel; it plays a direct role in the translocation of protons across the membrane. This Orientia tsutsugamushi (strain Ikeda) (Rickettsia tsutsugamushi) protein is ATP synthase subunit a.